The chain runs to 264 residues: Probable metallo-hydrolase YflN (264 aa).

7 residues coordinate Zn(2+): His-80, His-82, Asp-84, His-85, His-169, Asp-188, and His-241.

This sequence belongs to the metallo-beta-lactamase superfamily. The cofactor is Zn(2+).

This Bacillus subtilis (strain 168) protein is Probable metallo-hydrolase YflN (yflN).